A 307-amino-acid polypeptide reads, in one-letter code: tRNA(Met) cytidine acetate ligase (307 aa).

Residues 12–25, G106, N163, and R188 each bind ATP; that span reads VVEY…HIYQ.

Belongs to the TmcAL family.

The protein resides in the cytoplasm. It catalyses the reaction cytidine(34) in elongator tRNA(Met) + acetate + ATP = N(4)-acetylcytidine(34) in elongator tRNA(Met) + AMP + diphosphate. Functionally, catalyzes the formation of N(4)-acetylcytidine (ac(4)C) at the wobble position of elongator tRNA(Met), using acetate and ATP as substrates. First activates an acetate ion to form acetyladenylate (Ac-AMP) and then transfers the acetyl group to tRNA to form ac(4)C34. This is tRNA(Met) cytidine acetate ligase from Mycoplasmopsis synoviae (strain 53) (Mycoplasma synoviae).